The chain runs to 111 residues: Small ribosomal subunit protein bS16 (111 aa).

It belongs to the bacterial ribosomal protein bS16 family.

In Rickettsia typhi (strain ATCC VR-144 / Wilmington), this protein is Small ribosomal subunit protein bS16.